The sequence spans 178 residues: Probable chorismate pyruvate-lyase (178 aa).

Substrate is bound by residues Arg-67, Leu-105, and Glu-164.

It belongs to the UbiC family.

The protein localises to the cytoplasm. It catalyses the reaction chorismate = 4-hydroxybenzoate + pyruvate. It functions in the pathway cofactor biosynthesis; ubiquinone biosynthesis. Its function is as follows. Removes the pyruvyl group from chorismate, with concomitant aromatization of the ring, to provide 4-hydroxybenzoate (4HB) for the ubiquinone pathway. This chain is Probable chorismate pyruvate-lyase, found in Methylobacillus flagellatus (strain ATCC 51484 / DSM 6875 / VKM B-1610 / KT).